We begin with the raw amino-acid sequence, 71 residues long: UPF0337 protein PPA1427 (71 aa).

The segment at 20–46 is disordered; the sequence is EKIGGLTDDSDLKSAGADQKASGKVAQ.

It belongs to the UPF0337 (CsbD) family.

In Cutibacterium acnes (strain DSM 16379 / KPA171202) (Propionibacterium acnes), this protein is UPF0337 protein PPA1427.